Reading from the N-terminus, the 404-residue chain is 6-hydroxytryptophan 2,3-dioxygenase fscD (404 aa).

H341 serves as a coordination point for heme b.

Belongs to the indoleamine 2,3-dioxygenase family. It depends on heme as a cofactor.

It participates in secondary metabolite biosynthesis. In terms of biological role, 6-hydroxytryptophan 2,3-dioxygenase; part of the fragmented gene cluster that mediates the biosynthesis of fusarochromene, a tryptophan-derived metabolite closely related to a group of mycotoxins including fusarochromanone. Within the pathway, fscD is responsible of the cleavage of the pyrrole ring of 6-hydroxytryptophan. The first step of the pathway is the epimerization of L-tryptophan to D-tryptophan in the presence of the NRPS-like tryptophan epimerase fscC. D-tryptophan is subsequently hydroxylated by the tryptophan 6-hydroxylase fscE to yield 6-hydroxytryptophan. The pyrrole ring undergoes cleavaged by the tryptophan 2,3-dioxygenase fscD and is finally converted to 4-hydroxykyrunenine by the hydrolase fscH. The NRPS-like oxidoreductase fscA reduces the carboxyl group to primary alcohol and the DMATS-type prenyltransferase fscG performs prenylation, followed by the formation of a chromene ring catalyzed by the oxidoreductase fscI, which leads to desacetylfusarochromene. Epoxidation by fscF and rearrangement reactions of chromene double bonds convert compound desacetylfusarochromene to fusarochromanones. Although specific acetyltransferases were not found near the fsc gene cluster, several predicted enzymes containing the N-acetyltransferase superfamily domain are present in the genome of F.equiseti. These predicted enzymes may have the potential to convert desacetylfusarochromene to fusarochromene. This chain is 6-hydroxytryptophan 2,3-dioxygenase fscD, found in Fusarium equiseti (Fusarium scirpi).